Reading from the N-terminus, the 172-residue chain is Secretory-abundant heat soluble protein 64681 (172 aa).

Positions 1-19 (MSRTIVALILLGLAALAAA) are cleaved as a signal peptide. An SAHS-c1 region spans residues 30–59 (EWAGKAWLGKWVSTDRSENWDAFVEALGLP). Residues 74–102 (WKEGDHYHHQIIIADKSYKQDIQFKLGEE) form an SAHS-c2 region. 2 N-linked (GlcNAc...) asparagine glycosylation sites follow: asparagine 108 and asparagine 133. Residues 115–164 (KYTEVGDNLQNEVKIPSKNKTISDSYVVKGDELEKTYKINDVVAKRWYKK) form an SAHS-c3 region.

This sequence belongs to the Secretory-abundant heat soluble protein (SAHS) family.

It localises to the secreted. Functionally, secreted heat soluble protein acting as a molecular shield in water-deficient condition. Tardigrade-specific intrinsically disordered proteins (TDPs) are essential for desiccation tolerance by forming non-crystalline amorphous solids upon desiccation, and this vitrified state mirrors their protective capabilities. The chain is Secretory-abundant heat soluble protein 64681 from Hypsibius exemplaris (Freshwater tardigrade).